The following is a 350-amino-acid chain: Holliday junction branch migration complex subunit RuvB (350 aa).

Positions 4–184 (TDRLIAAQPQ…FGIVQRLEFY (181 aa)) are large ATPase domain (RuvB-L). ATP is bound by residues isoleucine 23, arginine 24, glycine 65, lysine 68, threonine 69, threonine 70, 131–133 (EDY), arginine 174, tyrosine 184, and arginine 221. Threonine 69 contributes to the Mg(2+) binding site. Residues 185 to 255 (AVEELTEIVV…IADQALNMLH (71 aa)) are small ATPAse domain (RuvB-S). A head domain (RuvB-H) region spans residues 258–350 (RHGLDHMDRR…PLTPPGESDA (93 aa)). DNA-binding residues include arginine 294, arginine 313, and arginine 318.

The protein belongs to the RuvB family. In terms of assembly, homohexamer. Forms an RuvA(8)-RuvB(12)-Holliday junction (HJ) complex. HJ DNA is sandwiched between 2 RuvA tetramers; dsDNA enters through RuvA and exits via RuvB. An RuvB hexamer assembles on each DNA strand where it exits the tetramer. Each RuvB hexamer is contacted by two RuvA subunits (via domain III) on 2 adjacent RuvB subunits; this complex drives branch migration. In the full resolvosome a probable DNA-RuvA(4)-RuvB(12)-RuvC(2) complex forms which resolves the HJ.

It localises to the cytoplasm. It catalyses the reaction ATP + H2O = ADP + phosphate + H(+). Functionally, the RuvA-RuvB-RuvC complex processes Holliday junction (HJ) DNA during genetic recombination and DNA repair, while the RuvA-RuvB complex plays an important role in the rescue of blocked DNA replication forks via replication fork reversal (RFR). RuvA specifically binds to HJ cruciform DNA, conferring on it an open structure. The RuvB hexamer acts as an ATP-dependent pump, pulling dsDNA into and through the RuvAB complex. RuvB forms 2 homohexamers on either side of HJ DNA bound by 1 or 2 RuvA tetramers; 4 subunits per hexamer contact DNA at a time. Coordinated motions by a converter formed by DNA-disengaged RuvB subunits stimulates ATP hydrolysis and nucleotide exchange. Immobilization of the converter enables RuvB to convert the ATP-contained energy into a lever motion, pulling 2 nucleotides of DNA out of the RuvA tetramer per ATP hydrolyzed, thus driving DNA branch migration. The RuvB motors rotate together with the DNA substrate, which together with the progressing nucleotide cycle form the mechanistic basis for DNA recombination by continuous HJ branch migration. Branch migration allows RuvC to scan DNA until it finds its consensus sequence, where it cleaves and resolves cruciform DNA. This chain is Holliday junction branch migration complex subunit RuvB, found in Chromohalobacter salexigens (strain ATCC BAA-138 / DSM 3043 / CIP 106854 / NCIMB 13768 / 1H11).